The primary structure comprises 576 residues: Ferroportin (576 aa).

Topologically, residues 1 to 23 (MPKAGEQARQGGCCGSLANYLTS) are cytoplasmic. The chain crosses the membrane as a helical span at residues 24 to 53 (AKFLLYLGHSLSTWGDRMWHFAVSVFLVEL). Fe cation-binding residues include D39 and H43. Residues 54–57 (YGNS) are Extracellular-facing. Residues 58-84 (LLLTAVYGLVVAGSVLVLGAIIGDWVD) traverse the membrane as a helical segment. Topologically, residues 85–87 (KNA) are cytoplasmic. Residues 88 to 118 (RLKVAQTSLVVQNVSVILCGIILMMVFLHKN) traverse the membrane as a helical segment. Over 119-126 (ELLTMYHG) the chain is Extracellular. The helical transmembrane segment at 127–162 (WVLTFCYILIITIADVANLASTATAITIQRDWIVVV) threads the bilayer. Residues 163–164 (AG) are Cytoplasmic-facing. The helical transmembrane segment at 165–195 (GDRSKLADMNATIRRIDQLTNILAPMAVGQI) threads the bilayer. At 196-202 (MTFGSAV) the chain is on the extracellular side. Residues 203–229 (IGCGFISGWNLVSMCVEYFLLWKVYQK) form a helical membrane-spanning segment. Residues 230–306 (TPALAVKAAL…DGWVSYYNQS (77 aa)) lie on the Cytoplasmic side of the membrane. The chain crosses the membrane as a helical span at residues 307–333 (VFLAGMGLAFLYMTVLGFDCITTGYAY). Residue C326 participates in Fe cation binding. The Extracellular portion of the chain corresponds to 334–338 (TQGLS). A helical transmembrane segment spans residues 339–366 (GSILSILMGASAITGIMGTVAFTWLRRK). Residues 367–368 (CG) are Cytoplasmic-facing. The helical transmembrane segment at 369-391 (LVRTGLISGFAQLSCLILCVISV) threads the bilayer. The Extracellular portion of the chain corresponds to 392 to 458 (FMPGSPLDLS…ETTPKSVPII (67 aa)). Residue N439 is glycosylated (N-linked (GlcNAc...) asparagine). Residues 459–488 (SVSLLFAGVIAARIGLWSFDLTVTQLLQEN) traverse the membrane as a helical segment. At 489 to 493 (VIESE) the chain is on the cytoplasmic side. The helical transmembrane segment at 494 to 518 (RGIINGVQNSMNYLLDLLHFIMVIL) threads the bilayer. H512 lines the Fe cation pocket. Topologically, residues 519-521 (APN) are extracellular. A helical membrane pass occupies residues 522-547 (PEAFGLLVLISVSFVAMGHIMYFRFA). The Cytoplasmic segment spans residues 548–576 (QKTLGSKLFACGADDEEVTNENQANTSVV).

The protein belongs to the ferroportin (FP) (TC 2.A.100) family. SLC40A subfamily. In terms of assembly, identified in a complex with STOM. Interacts with HAMP; affinity of the peptide hormone HAMP for SLC40A1 increases by 80-fold in the presence of iron and the interaction promotes SLC40A1 ubiquitination and degradation. Part of a complex composed of SLC40A1/ferroportin, TF/transferrin and HEPH/hephaestin that transfers iron from cells to transferrin. In terms of processing, polyubiquitinated by RNF217; leading to proteasomal degradation. Under conditions of high systemic iron levels, both the hormone peptide hepcidin/HAMP and holo(iron bound)-transferrin/TF induce the ubiquitination, internalization and proteasomal degradation of SLC40A1 to control iron release from cells.

The protein resides in the cell membrane. It localises to the basolateral cell membrane. It catalyses the reaction Fe(2+)(in) = Fe(2+)(out). Its activity is regulated as follows. During elevated serum iron levels, liver-derived hepcidin/HAMP negatively regulates cell surface ferroportin/SLC40A1 by inducing its ubiquitination, internalization, and degradation. Indeed, hepcidin/HAMP affinity towards ferroportin/SLC40A1 increases by 80-fold in the presence of iron. Transports Fe(2+) from the inside of a cell to the outside of the cell, playing a key role for maintaining systemic iron homeostasis. Transports iron from intestinal, splenic, hepatic cells, macrophages and erythrocytes into the blood to provide iron to other tissues. Controls therefore dietary iron uptake, iron recycling by macrophages and erythrocytes, and release of iron stores in hepatocytes. When iron is in excess in serum, circulating HAMP/hepcidin levels increase resulting in a degradation of SLC40A1, thus limiting the iron efflux to plasma. The protein is Ferroportin of Canis lupus familiaris (Dog).